The following is an 89-amino-acid chain: Small ribosomal subunit protein uS15 (89 aa).

The protein belongs to the universal ribosomal protein uS15 family. As to quaternary structure, part of the 30S ribosomal subunit. Forms a bridge to the 50S subunit in the 70S ribosome, contacting the 23S rRNA.

In terms of biological role, one of the primary rRNA binding proteins, it binds directly to 16S rRNA where it helps nucleate assembly of the platform of the 30S subunit by binding and bridging several RNA helices of the 16S rRNA. Functionally, forms an intersubunit bridge (bridge B4) with the 23S rRNA of the 50S subunit in the ribosome. This is Small ribosomal subunit protein uS15 from Bartonella henselae (strain ATCC 49882 / DSM 28221 / CCUG 30454 / Houston 1) (Rochalimaea henselae).